A 1092-amino-acid chain; its full sequence is Extended synaptotagmin-1 (1092 aa).

The residue at position 1 (methionine 1) is an N-acetylmethionine. At 1–28 (MEHSPEEGASPEPSGQPPATDSTRDGGS) the chain is on the cytoplasmic side. The tract at residues 1–36 (MEHSPEEGASPEPSGQPPATDSTRDGGSGVPPAGPG) is disordered. A helical transmembrane segment spans residues 29–49 (GVPPAGPGAASEALAVLTSFG). Topologically, residues 50-52 (RRL) are lumenal. The helical transmembrane segment at 53 to 73 (LVLVPVYLAGAAGLSVGFVLF) threads the bilayer. Residues 74–1092 (GLALYLGWRR…LMDDRDKGGS (1019 aa)) lie on the Cytoplasmic side of the membrane. Positions 125-303 (DVEKAEWLNK…LPNRLLVPLV (179 aa)) constitute an SMP-LTD domain. C2 domains are found at residues 302-423 (LVPD…DNWY), 444-570 (DAEK…QLSS), 616-738 (DAPP…DEWL), and 769-886 (QVNS…ALSG). The residue at position 314 (serine 314) is a Phosphoserine; by CDK5. Residues lysine 334, aspartate 335, aspartate 347, aspartate 394, aspartate 396, aspartate 398, aspartate 400, and aspartate 401 each contribute to the Ca(2+) site. Residues 604 to 628 (WDRESLETGSSVDAPPRPYHTTPNS) are disordered. Lysine 804 is subject to N6-acetyllysine. A Phosphoserine modification is found at serine 807. Positions 909 to 937 (HSHSYSHSHSSSSLNDEPEALGGPTHPAS) are disordered. Over residues 911-921 (HSYSHSHSSSS) the composition is skewed to low complexity. Residues serine 937 and serine 951 each carry the phosphoserine modification. Residues 959–1081 (PLGQVKLTVW…DLSQGAAQWY (123 aa)) form the C2 5 domain. Phosphotyrosine is present on tyrosine 997. The tract at residues 1006 to 1013 (KNRSTKRK) is required for phosphatidylinositol 4,5-bisphosphate-dependent location at the cell membrane.

It belongs to the extended synaptotagmin family. In terms of assembly, interacts with ESYT2 and ESYT3. Interacts with ADGRD1; inhibiting the G-protein-coupled receptor activity of ADGRD1. Interaction with ADGRD1 is abolished when cytosolic calcium increases, relieving ADGRD1 G-protein-coupled receptor activity. Interacts (phosphorylated form) with SLC2A4. In terms of processing, phosphorylated on Ser residues in insulin-treated adipocytes (in vitro); this promotes interaction with SLC2A4.

It is found in the endoplasmic reticulum membrane. The protein localises to the cell membrane. In terms of biological role, binds calcium (via the C2 domains) and translocates to sites of contact between the endoplasmic reticulum and the cell membrane in response to increased cytosolic calcium levels. Helps tether the endoplasmic reticulum to the cell membrane and promotes the formation of appositions between the endoplasmic reticulum and the cell membrane. Acts as an inhibitor of ADGRD1 G-protein-coupled receptor activity in absence of cytosolic calcium. Binds glycerophospholipids in a barrel-like domain and may play a role in cellular lipid transport. This is Extended synaptotagmin-1 (Esyt1) from Mus musculus (Mouse).